The following is a 218-amino-acid chain: MPVTLGYWDIRGLGHAIRLLLEYTETGYEEKRYAMGDAPDYDRSQWLNDKFKLDLDFPNLPYLIDGSHKVTQSNAILRYLGRKHNLCGETEEERIRVDILEKQVMDTRIQMGMLCYSADFEKRKPEFLKGLPDQLKLYSEFLGKQPWFAGDKITFADFLVYDVLDQHRMFEPTCLDAFPNLKDFMARFEGLRKISAYMKTSRFLPSPVYLKQATWGNE.

Positions 1 to 88 constitute a GST N-terminal domain; that stretch reads MPVTLGYWDI…YLGRKHNLCG (88 aa). Glutathione contacts are provided by residues 7–8, 46–50, 59–60, and 72–73; these read YW, WLNDK, NL, and QS. The GST C-terminal domain occupies 90-208; the sequence is TEEERIRVDI…KTSRFLPSPV (119 aa). Tyrosine 116 provides a ligand contact to substrate.

Belongs to the GST superfamily. Mu family. Homodimer. As to expression, expressed in liver, stomach and small intestine. Not expressed in spleen, kidney, colon, heart, muscle, brain or lung.

The protein resides in the cytoplasm. The catalysed reaction is RX + glutathione = an S-substituted glutathione + a halide anion + H(+). Its function is as follows. Conjugation of reduced glutathione to a wide number of exogenous and endogenous hydrophobic electrophiles. The polypeptide is Glutathione S-transferase Mu 6 (Gstm6) (Mus musculus (Mouse)).